The sequence spans 566 residues: Arginine--tRNA ligase (566 aa).

Positions 121–131 (ANPNGPFHIGH) match the 'HIGH' region motif.

This sequence belongs to the class-I aminoacyl-tRNA synthetase family.

The protein localises to the cytoplasm. The catalysed reaction is tRNA(Arg) + L-arginine + ATP = L-arginyl-tRNA(Arg) + AMP + diphosphate. In Methanococcus maripaludis (strain C7 / ATCC BAA-1331), this protein is Arginine--tRNA ligase.